Reading from the N-terminus, the 149-residue chain is Nucleoside diphosphate kinase (149 aa).

Lys9, Phe57, Arg85, Thr91, Arg102, and Asn112 together coordinate ATP. The active-site Pros-phosphohistidine intermediate is the His115.

Belongs to the NDK family. In terms of assembly, homotetramer. It depends on Mg(2+) as a cofactor.

The protein resides in the cytoplasm. The catalysed reaction is dZDP + ATP = dZTP + ADP. It carries out the reaction a 2'-deoxyribonucleoside 5'-diphosphate + ATP = a 2'-deoxyribonucleoside 5'-triphosphate + ADP. The enzyme catalyses a ribonucleoside 5'-diphosphate + ATP = a ribonucleoside 5'-triphosphate + ADP. It participates in purine metabolism. Functionally, major role in the synthesis of nucleoside triphosphates other than ATP. The ATP gamma phosphate is transferred to the NDP beta phosphate via a ping-pong mechanism, using a phosphorylated active-site intermediate. (Microbial infection) Catalyzes the phosphorylation of dZDP to dZTP, when the bacterium is infected by a phage that produces the substrate for the synthesis of dZTP (2- amino-2'-deoxyadenosine 5'-triphosphate), which is then used by the phage as a DNA polymerase substrate. This chain is Nucleoside diphosphate kinase, found in Synechococcus sp. (strain JA-3-3Ab) (Cyanobacteria bacterium Yellowstone A-Prime).